The chain runs to 165 residues: SsrA-binding protein (165 aa).

Belongs to the SmpB family.

It is found in the cytoplasm. Its function is as follows. Required for rescue of stalled ribosomes mediated by trans-translation. Binds to transfer-messenger RNA (tmRNA), required for stable association of tmRNA with ribosomes. tmRNA and SmpB together mimic tRNA shape, replacing the anticodon stem-loop with SmpB. tmRNA is encoded by the ssrA gene; the 2 termini fold to resemble tRNA(Ala) and it encodes a 'tag peptide', a short internal open reading frame. During trans-translation Ala-aminoacylated tmRNA acts like a tRNA, entering the A-site of stalled ribosomes, displacing the stalled mRNA. The ribosome then switches to translate the ORF on the tmRNA; the nascent peptide is terminated with the 'tag peptide' encoded by the tmRNA and targeted for degradation. The ribosome is freed to recommence translation, which seems to be the essential function of trans-translation. The sequence is that of SsrA-binding protein from Prochlorococcus marinus (strain MIT 9515).